The chain runs to 91 residues: DNA-binding protein HU (91 aa).

It belongs to the bacterial histone-like protein family.

Functionally, histone-like DNA-binding protein which is capable of wrapping DNA to stabilize it, and thus to prevent its denaturation under extreme environmental conditions. The polypeptide is DNA-binding protein HU (hup) (Clostridium pasteurianum).